The primary structure comprises 341 residues: uncharacterized protein (341 aa).

Residues 153–179 are a coiled coil; the sequence is AYTLSEKVMNAEREAEETRETIIREAH. Residues 319 to 335 show a composition bias toward polar residues; that stretch reads EQLQNPAPESAPSTSKT. A disordered region spans residues 319–341; that stretch reads EQLQNPAPESAPSTSKTLRSKNP.

This is an uncharacterized protein from Coxiella burnetii (strain RSA 493 / Nine Mile phase I).